A 122-amino-acid polypeptide reads, in one-letter code: Large ribosomal subunit protein uL14 (122 aa).

This sequence belongs to the universal ribosomal protein uL14 family. Part of the 50S ribosomal subunit. Forms a cluster with proteins L3 and L19. In the 70S ribosome, L14 and L19 interact and together make contacts with the 16S rRNA in bridges B5 and B8.

Binds to 23S rRNA. Forms part of two intersubunit bridges in the 70S ribosome. The polypeptide is Large ribosomal subunit protein uL14 (Pediococcus pentosaceus (strain ATCC 25745 / CCUG 21536 / LMG 10740 / 183-1w)).